Consider the following 234-residue polypeptide: 7-cyano-7-deazaguanine synthase (234 aa).

Residue 15-25 (LSGGLDSSTCL) participates in ATP binding. 4 residues coordinate Zn(2+): Cys199, Cys208, Cys211, and Cys214.

It belongs to the QueC family. Zn(2+) serves as cofactor.

It carries out the reaction 7-carboxy-7-deazaguanine + NH4(+) + ATP = 7-cyano-7-deazaguanine + ADP + phosphate + H2O + H(+). It participates in purine metabolism; 7-cyano-7-deazaguanine biosynthesis. Its function is as follows. Catalyzes the ATP-dependent conversion of 7-carboxy-7-deazaguanine (CDG) to 7-cyano-7-deazaguanine (preQ(0)). In Anaeromyxobacter dehalogenans (strain 2CP-C), this protein is 7-cyano-7-deazaguanine synthase.